The chain runs to 306 residues: ATP synthase F(1) complex subunit gamma, mitochondrial (306 aa).

The transit peptide at 1-17 (MNSASKLFVVLASPANQ) directs the protein to the mitochondrion.

This sequence belongs to the ATPase gamma chain family. In terms of assembly, component of the ATP synthase complex composed at least of ATP5F1A/subunit alpha, ATP5F1B/subunit beta, ATP5MC1/subunit c (homooctomer), MT-ATP6/subunit a, MT-ATP8/subunit 8, ATP5ME/subunit e, ATP5MF/subunit f, ATP5MG/subunit g, ATP5MK/subunit k, ATP5MJ/subunit j, ATP5F1C/subunit gamma, ATP5F1D/subunit delta, ATP5F1E/subunit epsilon, ATP5PF/subunit F6, ATP5PB/subunit b, ATP5PD/subunit d, ATP5PO/subunit OSCP. ATP synthase complex consists of a soluble F(1) head domain (subunits alpha(3) and beta(3)) - the catalytic core - and a membrane F(0) domain - the membrane proton channel (subunits c, a, 8, e, f, g, k and j). These two domains are linked by a central stalk (subunits gamma, delta, and epsilon) rotating inside the F1 region and a stationary peripheral stalk (subunits F6, b, d, and OSCP).

The protein localises to the mitochondrion inner membrane. Subunit gamma, of the mitochondrial membrane ATP synthase complex (F(1)F(0) ATP synthase or Complex V) that produces ATP from ADP in the presence of a proton gradient across the membrane which is generated by electron transport complexes of the respiratory chain. ATP synthase complex consist of a soluble F(1) head domain - the catalytic core - and a membrane F(1) domain - the membrane proton channel. These two domains are linked by a central stalk rotating inside the F(1) region and a stationary peripheral stalk. During catalysis, ATP synthesis in the catalytic domain of F(1) is coupled via a rotary mechanism of the central stalk subunits to proton translocation. In vivo, can only synthesize ATP although its ATP hydrolase activity can be activated artificially in vitro. With the central stalk subunit delta, is essential for the biogenesis of F(1) catalytic part of the ATP synthase complex namely in the formation of F1 assembly intermediate. The sequence is that of ATP synthase F(1) complex subunit gamma, mitochondrial from Dictyostelium discoideum (Social amoeba).